The chain runs to 619 residues: Probable ATP-dependent RNA helicase DDX59 (619 aa).

Lys26 participates in a covalent cross-link: Glycyl lysine isopeptide (Lys-Gly) (interchain with G-Cter in SUMO2). Positions Ser57–Gln98 are disordered. Residues Ser64 and Ser76 each carry the phosphoserine modification. The span at Gly80–Val91 shows a compositional bias: basic and acidic residues. The HIT-type zinc-finger motif lies at Gly104–Ala133. Residues Lys142–Pro161 are disordered. Phosphoserine is present on residues Ser156 and Ser160. A Q motif motif is present at residues Ile203 to Met231. Residues Ile234 to Ile405 enclose the Helicase ATP-binding domain. Position 247 to 254 (Ala247 to Thr254) interacts with ATP. The DEAD box motif lies at Asp353 to Asp356. A Helicase C-terminal domain is found at Asn416 to Pro579.

It belongs to the DEAD box helicase family. DDX59 subfamily. Interacts (via HIT-type zinc finger) with the RUVBL1/RUVBL2 complex in the presence of ADP. As to expression, expressed in fibroblasts (at protein level).

The protein resides in the cytoplasm. The protein localises to the nucleus. It catalyses the reaction ATP + H2O = ADP + phosphate + H(+). This Homo sapiens (Human) protein is Probable ATP-dependent RNA helicase DDX59 (DDX59).